The primary structure comprises 289 residues: Probable porphobilinogen deaminase (289 aa).

Cys-233 carries the post-translational modification S-(dipyrrolylmethanemethyl)cysteine.

It belongs to the HMBS family. Requires dipyrromethane as cofactor.

It carries out the reaction 4 porphobilinogen + H2O = hydroxymethylbilane + 4 NH4(+). It participates in porphyrin-containing compound metabolism; protoporphyrin-IX biosynthesis; coproporphyrinogen-III from 5-aminolevulinate: step 2/4. Tetrapolymerization of the monopyrrole PBG into the hydroxymethylbilane pre-uroporphyrinogen in several discrete steps. In Methanothermobacter thermautotrophicus (strain ATCC 29096 / DSM 1053 / JCM 10044 / NBRC 100330 / Delta H) (Methanobacterium thermoautotrophicum), this protein is Probable porphobilinogen deaminase (hemC).